Consider the following 228-residue polypeptide: Probable U3 small nucleolar RNA-associated protein 11 (228 aa).

Disordered regions lie at residues 1-23 (MSSL…EARK) and 192-211 (SMQK…DDEL). The span at 12–23 (AHKERSQPEARK) shows a compositional bias: basic and acidic residues.

It belongs to the UTP11 family. In terms of assembly, component of the ribosomal small subunit (SSU) processome.

The protein localises to the nucleus. It localises to the nucleolus. In terms of biological role, involved in nucleolar processing of pre-18S ribosomal RNA. The chain is Probable U3 small nucleolar RNA-associated protein 11 from Arabidopsis thaliana (Mouse-ear cress).